Reading from the N-terminus, the 754-residue chain is 5-methyltetrahydropteroyltriglutamate--homocysteine methyltransferase (754 aa).

5-methyltetrahydropteroyltri-L-glutamate contacts are provided by residues 17–20 (RELK) and K117. Residues 431–433 (IGS) and E484 each bind L-homocysteine. Residues 431-433 (IGS) and E484 contribute to the L-methionine site. 5-methyltetrahydropteroyltri-L-glutamate is bound by residues 515–516 (RC) and W561. Residue D599 coordinates L-homocysteine. D599 is an L-methionine binding site. Residue E605 participates in 5-methyltetrahydropteroyltri-L-glutamate binding. H641, C643, and E665 together coordinate Zn(2+). H694 functions as the Proton donor in the catalytic mechanism. C726 provides a ligand contact to Zn(2+).

The protein belongs to the vitamin-B12 independent methionine synthase family. Zn(2+) is required as a cofactor.

The catalysed reaction is 5-methyltetrahydropteroyltri-L-glutamate + L-homocysteine = tetrahydropteroyltri-L-glutamate + L-methionine. The protein operates within amino-acid biosynthesis; L-methionine biosynthesis via de novo pathway; L-methionine from L-homocysteine (MetE route): step 1/1. Its function is as follows. Catalyzes the transfer of a methyl group from 5-methyltetrahydrofolate to homocysteine resulting in methionine formation. This Salmonella agona (strain SL483) protein is 5-methyltetrahydropteroyltriglutamate--homocysteine methyltransferase.